A 454-amino-acid polypeptide reads, in one-letter code: Bleomycin hydrolase (454 aa).

N-acetylmethionine is present on Met1. Residues Cys73 and His372 contribute to the active site. Position 391 is an N6-acetyllysine (Lys391). Asn396 is a catalytic residue.

It belongs to the peptidase C1 family. As to quaternary structure, homohexamer. Interacts with NUDT12 (via ANK repeats). As to expression, expressed at relatively higher levels in the stomach, esophagus, spleen, thymus and testis, and at lower levels in the skin, lung and skeletal muscle.

It localises to the cytoplasm. The protein localises to the cytoplasmic granule. The catalysed reaction is Inactivates bleomycin B2 (a cytotoxic glycometallopeptide) by hydrolysis of a carboxyamide bond of beta-aminoalanine, but also shows general aminopeptidase activity. The specificity varies somewhat with source, but amino acid arylamides of Met, Leu and Ala are preferred.. In terms of biological role, the normal physiological role of BLM hydrolase is unknown, but it catalyzes the inactivation of the antitumor drug BLM (a glycopeptide) by hydrolyzing the carboxamide bond of its B-aminoalaninamide moiety thus protecting normal and malignant cells from BLM toxicity. Binds single-stranded DNA with higher affinity than double-stranded DNA. May play an important role in the metabolism of antibiotics. In Rattus norvegicus (Rat), this protein is Bleomycin hydrolase (Blmh).